The following is a 299-amino-acid chain: Protein PRY1 (299 aa).

Positions 1 to 19 are cleaved as a signal peptide; it reads MKLSKLSILTSALATSALA. The tract at residues 103-157 is disordered; the sequence is TDSTTTLTSSESTSQSLAQATTTSTPAAASTTSTPAATTTTSQAAATSSASSSDS. Positions 167 to 281 constitute an SCP domain; that stretch reads LAEHNKKRAL…AWGDYVICSY (115 aa).

This sequence belongs to the CRISP family. Post-translationally, O-glycosylated.

It is found in the secreted. Functionally, secreted protein required for efficient export of lipids such as acetylated sterols. Acts in detoxification of hydrophobic compounds. The sequence is that of Protein PRY1 from Saccharomyces cerevisiae (strain ATCC 204508 / S288c) (Baker's yeast).